A 228-amino-acid chain; its full sequence is Ribose-5-phosphate isomerase A (228 aa).

Residues 29–32, 85–88, and 98–101 each bind substrate; these read TGST, DGAD, and KGGG. The Proton acceptor role is filled by E107. K125 serves as a coordination point for substrate.

It belongs to the ribose 5-phosphate isomerase family. Homodimer.

It catalyses the reaction aldehydo-D-ribose 5-phosphate = D-ribulose 5-phosphate. Its pathway is carbohydrate degradation; pentose phosphate pathway; D-ribose 5-phosphate from D-ribulose 5-phosphate (non-oxidative stage): step 1/1. Catalyzes the reversible conversion of ribose-5-phosphate to ribulose 5-phosphate. This is Ribose-5-phosphate isomerase A from Staphylococcus aureus (strain Mu50 / ATCC 700699).